The primary structure comprises 551 residues: RanBD1 domain-containing protein C584.03c (551 aa).

In terms of domain architecture, RanBD1 spans methionine 1 to threonine 309. Residue serine 441 is modified to Phosphoserine. A disordered region spans residues serine 522–proline 551.

It is found in the nucleus. The sequence is that of RanBD1 domain-containing protein C584.03c from Schizosaccharomyces pombe (strain 972 / ATCC 24843) (Fission yeast).